A 393-amino-acid polypeptide reads, in one-letter code: 4-hydroxyphenylpyruvate dioxygenase (393 aa).

Thr2 is subject to N-acetylthreonine. 2 consecutive VOC domains span residues 18-149 and 180-338; these read HFHS…LVEK and IIDH…IFTK. N6-succinyllysine is present on Lys132. A Fe cation-binding site is contributed by His183. A phosphoserine mark is found at Ser211, Ser226, and Ser250. Residues His266 and Glu349 each coordinate Fe cation.

Belongs to the 4HPPD family. Homodimer. It depends on Fe cation as a cofactor.

The protein localises to the cytoplasm. It localises to the endoplasmic reticulum membrane. The protein resides in the golgi apparatus membrane. The catalysed reaction is 3-(4-hydroxyphenyl)pyruvate + O2 = homogentisate + CO2. It participates in amino-acid degradation; L-phenylalanine degradation; acetoacetate and fumarate from L-phenylalanine: step 3/6. Catalyzes the conversion of 4-hydroxyphenylpyruvic acid to homogentisic acid, one of the steps in tyrosine catabolism. This Rattus norvegicus (Rat) protein is 4-hydroxyphenylpyruvate dioxygenase (Hpd).